Reading from the N-terminus, the 37-residue chain is Cytochrome b6-f complex subunit 5 (37 aa).

The chain crosses the membrane as a helical span at residues 5-25 (LLSGIVLGLISITSAGLFVTA).

It belongs to the PetG family. The 4 large subunits of the cytochrome b6-f complex are cytochrome b6, subunit IV (17 kDa polypeptide, PetD), cytochrome f and the Rieske protein, while the 4 small subunits are PetG, PetL, PetM and PetN. The complex functions as a dimer.

Its subcellular location is the plastid. It localises to the chloroplast thylakoid membrane. Functionally, component of the cytochrome b6-f complex, which mediates electron transfer between photosystem II (PSII) and photosystem I (PSI), cyclic electron flow around PSI, and state transitions. PetG is required for either the stability or assembly of the cytochrome b6-f complex. The sequence is that of Cytochrome b6-f complex subunit 5 from Psilotum nudum (Whisk fern).